Here is a 277-residue protein sequence, read N- to C-terminus: Diaminopimelate epimerase (277 aa).

Residues Asn-15 and Asn-74 each contribute to the substrate site. Cys-83 serves as the catalytic Proton donor. Residues 84–85, Asn-159, Asn-194, and 212–213 each bind substrate; these read GN and ER. Catalysis depends on Cys-221, which acts as the Proton acceptor. 222–223 serves as a coordination point for substrate; sequence GT.

The protein belongs to the diaminopimelate epimerase family. In terms of assembly, homodimer.

Its subcellular location is the cytoplasm. It carries out the reaction (2S,6S)-2,6-diaminopimelate = meso-2,6-diaminopimelate. It participates in amino-acid biosynthesis; L-lysine biosynthesis via DAP pathway; DL-2,6-diaminopimelate from LL-2,6-diaminopimelate: step 1/1. In terms of biological role, catalyzes the stereoinversion of LL-2,6-diaminopimelate (L,L-DAP) to meso-diaminopimelate (meso-DAP), a precursor of L-lysine and an essential component of the bacterial peptidoglycan. In Corynebacterium glutamicum (strain R), this protein is Diaminopimelate epimerase.